The primary structure comprises 801 residues: Elongation factor G, mitochondrial (801 aa).

The transit peptide at Met1–Leu24 directs the protein to the mitochondrion. The region spanning Ser99–Ser386 is the tr-type G domain. Residues Ala108 to Thr115, Asp184 to His188, and Asn238 to Asp241 contribute to the GTP site.

Belongs to the TRAFAC class translation factor GTPase superfamily. Classic translation factor GTPase family. EF-G/EF-2 subfamily.

It is found in the mitochondrion. It functions in the pathway protein biosynthesis; polypeptide chain elongation. Functionally, mitochondrial GTPase that catalyzes the GTP-dependent ribosomal translocation step during translation elongation. During this step, the ribosome changes from the pre-translocational (PRE) to the post-translocational (POST) state as the newly formed A-site-bound peptidyl-tRNA and P-site-bound deacylated tRNA move to the P and E sites, respectively. Catalyzes the coordinated movement of the two tRNA molecules, the mRNA and conformational changes in the ribosome. This is Elongation factor G, mitochondrial (mef1) from Aspergillus clavatus (strain ATCC 1007 / CBS 513.65 / DSM 816 / NCTC 3887 / NRRL 1 / QM 1276 / 107).